We begin with the raw amino-acid sequence, 447 residues long: MTKRVTIIDVKDYVGQEVTIGAWVANKSGKGKIAFLQLRDGTAFFQGVAFKPNFVEKFGEEVGLEKFDVIKRLSQETSVYVTGIVKEDERSKFGYELDITDIEVIGESQDYPITPKEHGTDFLMDNRHLWLRSRKQVAVLQIRNAIIYATYEFFDKNGFMKFDSPILSGNAAEDSTELFETDYFGTPAYLSQSGQLYLEAGAMALGRVFDFGPVFRAEKSKTRRHLTEFWMMDAEYSYLTHDESLDLQEAYVKALLQGVLDRAPQALETLERDTELLKRYIAEPFKRITYDQAIDLLQEHENDEDADYEHLEHGDDFGSPHETWISNHFGVPTFVMNYPAAIKAFYMKPVPGNPERVLCADLLAPEGYGEIIGGSMREEDYDALVAKMDELGMDRTEYEFYLDLRKYGTVPHGGFGIGIERMVTFAAGTKHIREAIPFPRMLHRIKP.

The protein belongs to the class-II aminoacyl-tRNA synthetase family. In terms of assembly, homodimer.

It is found in the cytoplasm. The enzyme catalyses tRNA(Asn) + L-asparagine + ATP = L-asparaginyl-tRNA(Asn) + AMP + diphosphate + H(+). In Streptococcus pneumoniae serotype 4 (strain ATCC BAA-334 / TIGR4), this protein is Asparagine--tRNA ligase.